The chain runs to 193 residues: Xanthine phosphoribosyltransferase (193 aa).

2 residues coordinate xanthine: Leu20 and Thr27. A 5-phospho-alpha-D-ribose 1-diphosphate-binding site is contributed by 128–132 (ANGQA). Lys156 is a xanthine binding site.

It belongs to the purine/pyrimidine phosphoribosyltransferase family. Xpt subfamily. Homodimer.

It localises to the cytoplasm. The catalysed reaction is XMP + diphosphate = xanthine + 5-phospho-alpha-D-ribose 1-diphosphate. It participates in purine metabolism; XMP biosynthesis via salvage pathway; XMP from xanthine: step 1/1. In terms of biological role, converts the preformed base xanthine, a product of nucleic acid breakdown, to xanthosine 5'-monophosphate (XMP), so it can be reused for RNA or DNA synthesis. This chain is Xanthine phosphoribosyltransferase, found in Streptococcus pneumoniae serotype 4 (strain ATCC BAA-334 / TIGR4).